Consider the following 272-residue polypeptide: Aquaporin FA-CHIP (272 aa).

The Cytoplasmic segment spans residues 1 to 17 (MASEFKKKAFWRAVIAE). The helical transmembrane segment at 18-35 (FLAMILFVFISIGAALGF) threads the bilayer. The Extracellular segment spans residues 36-52 (NFPIEEKANQTVGRSQD). A glycan (N-linked (GlcNAc...) asparagine) is linked at Asn-44. The helical transmembrane segment at 53–71 (IVKVSLAFGISIATMAQSV) threads the bilayer. Over 72-97 (GHVSGAHLNPAVTLGCLLSCQISILK) the chain is Cytoplasmic. The short motif at 80–82 (NPA) is the NPA 1 element. Residues 98–119 (AVMYIIAQCLGAVVATAILSGI) form a helical membrane-spanning segment. The Extracellular portion of the chain corresponds to 120–139 (TSGLENNSLGLNGLSPGVSA). Residue Asn-125 is glycosylated (N-linked (GlcNAc...) asparagine). The helical transmembrane segment at 140-160 (GQGLGVEILVTFQLVLCVVAV) threads the bilayer. The Cytoplasmic segment spans residues 161–168 (TDRRRHDV). The helical transmembrane segment at 169 to 188 (SGSVPLAIGLSVALGHLIAI) threads the bilayer. Over 189–214 (DYTGCGMNPARSFGSAVLTKNFTYHW) the chain is Extracellular. The NPA 2 motif lies at 196 to 198 (NPA). The N-linked (GlcNAc...) asparagine glycan is linked to Asn-209. The chain crosses the membrane as a helical span at residues 215 to 236 (IFWVGPMIGGAAAAIIYDFILA). The Cytoplasmic portion of the chain corresponds to 237–272 (PRTSDLTDRMKVWTNGQVEEYELDGDDNTRVEMKPK).

Belongs to the MIP/aquaporin (TC 1.A.8) family.

The protein localises to the membrane. Forms a water-specific channel. The protein is Aquaporin FA-CHIP (AQPA) of Pelophylax lessonae (Pool frog).